The following is a 260-amino-acid chain: Indole-3-glycerol phosphate synthase (260 aa).

It belongs to the TrpC family.

It catalyses the reaction 1-(2-carboxyphenylamino)-1-deoxy-D-ribulose 5-phosphate + H(+) = (1S,2R)-1-C-(indol-3-yl)glycerol 3-phosphate + CO2 + H2O. It participates in amino-acid biosynthesis; L-tryptophan biosynthesis; L-tryptophan from chorismate: step 4/5. The polypeptide is Indole-3-glycerol phosphate synthase (Staphylococcus aureus (strain Mu3 / ATCC 700698)).